The primary structure comprises 218 residues: MLEAKNLTCIRDDRCLFQQLSFCIAPGEIVQIEGPNGAGKTSLLRILAGLAEADEGQVNWRDKNIRRDRAKYHQDLLFLGHQPGIKSVLTPFENLLFYQSVFQKVDSAAIWQALAQVGLVGYEDLPVSQLSAGQQRRVALARLWLSPAPLWILDEPLTAIDKQGVSTLLALFVQHAAKGGMVLLTTHQDLGAVSHNVRKICLANTQEKSCLSACCAVN.

The region spanning 2 to 217 is the ABC transporter domain; sequence LEAKNLTCIR…KSCLSACCAV (216 aa). 34 to 41 lines the ATP pocket; it reads GPNGAGKT.

This sequence belongs to the ABC transporter superfamily. CcmA exporter (TC 3.A.1.107) family. The complex is composed of two ATP-binding proteins (CcmA) and two transmembrane proteins (CcmB).

Its subcellular location is the cell inner membrane. It catalyses the reaction heme b(in) + ATP + H2O = heme b(out) + ADP + phosphate + H(+). Its function is as follows. Part of the ABC transporter complex CcmAB involved in the biogenesis of c-type cytochromes; once thought to export heme, this seems not to be the case, but its exact role is uncertain. Responsible for energy coupling to the transport system. The sequence is that of Cytochrome c biogenesis ATP-binding export protein CcmA from Yersinia pestis.